We begin with the raw amino-acid sequence, 439 residues long: Lipoyl synthase, mitochondrial (439 aa).

Residues 1-37 constitute a mitochondrion transit peptide; sequence MVASARGLRTLHSAHSSISALPASTVPRLQLAVSRCY. [4Fe-4S] cluster contacts are provided by cysteine 150, cysteine 155, cysteine 161, cysteine 181, cysteine 185, cysteine 188, and serine 396. The Radical SAM core domain occupies 164 to 385; the sequence is GSSKSAATAT…KERALEMGFL (222 aa).

It belongs to the radical SAM superfamily. Lipoyl synthase family. It depends on [4Fe-4S] cluster as a cofactor.

It localises to the mitochondrion. It carries out the reaction [[Fe-S] cluster scaffold protein carrying a second [4Fe-4S](2+) cluster] + N(6)-octanoyl-L-lysyl-[protein] + 2 oxidized [2Fe-2S]-[ferredoxin] + 2 S-adenosyl-L-methionine + 4 H(+) = [[Fe-S] cluster scaffold protein] + N(6)-[(R)-dihydrolipoyl]-L-lysyl-[protein] + 4 Fe(3+) + 2 hydrogen sulfide + 2 5'-deoxyadenosine + 2 L-methionine + 2 reduced [2Fe-2S]-[ferredoxin]. It participates in protein modification; protein lipoylation via endogenous pathway; protein N(6)-(lipoyl)lysine from octanoyl-[acyl-carrier-protein]: step 2/2. In terms of biological role, catalyzes the radical-mediated insertion of two sulfur atoms into the C-6 and C-8 positions of the octanoyl moiety bound to the lipoyl domains of lipoate-dependent enzymes, thereby converting the octanoylated domains into lipoylated derivatives. The chain is Lipoyl synthase, mitochondrial from Paracoccidioides lutzii (strain ATCC MYA-826 / Pb01) (Paracoccidioides brasiliensis).